Consider the following 485-residue polypeptide: 2-succinylbenzoate--CoA ligase (485 aa).

The protein belongs to the ATP-dependent AMP-binding enzyme family. MenE subfamily.

It catalyses the reaction 2-succinylbenzoate + ATP + CoA = 2-succinylbenzoyl-CoA + AMP + diphosphate. Its pathway is quinol/quinone metabolism; 1,4-dihydroxy-2-naphthoate biosynthesis; 1,4-dihydroxy-2-naphthoate from chorismate: step 5/7. The protein operates within quinol/quinone metabolism; menaquinone biosynthesis. Functionally, converts 2-succinylbenzoate (OSB) to 2-succinylbenzoyl-CoA (OSB-CoA). The polypeptide is 2-succinylbenzoate--CoA ligase (Enterococcus faecalis (strain ATCC 700802 / V583)).